A 305-amino-acid chain; its full sequence is Oxygen-dependent coproporphyrinogen-III oxidase (305 aa).

Serine 93 contacts substrate. Positions 97 and 107 each coordinate a divalent metal cation. Residue histidine 107 is the Proton donor of the active site. Asparagine 109 to arginine 111 is a binding site for substrate. A divalent metal cation-binding residues include histidine 146 and histidine 176. The interval tyrosine 241–glycine 276 is important for dimerization. Glycine 259–arginine 261 contacts substrate.

It belongs to the aerobic coproporphyrinogen-III oxidase family. In terms of assembly, homodimer. The cofactor is a divalent metal cation.

The protein resides in the cytoplasm. The catalysed reaction is coproporphyrinogen III + O2 + 2 H(+) = protoporphyrinogen IX + 2 CO2 + 2 H2O. It participates in porphyrin-containing compound metabolism; protoporphyrin-IX biosynthesis; protoporphyrinogen-IX from coproporphyrinogen-III (O2 route): step 1/1. Involved in the heme biosynthesis. Catalyzes the aerobic oxidative decarboxylation of propionate groups of rings A and B of coproporphyrinogen-III to yield the vinyl groups in protoporphyrinogen-IX. The sequence is that of Oxygen-dependent coproporphyrinogen-III oxidase from Pseudomonas aeruginosa (strain LESB58).